The sequence spans 155 residues: Large ribosomal subunit protein eL24 (155 aa).

The segment covering 97 to 129 (KPEIRKAKRDEKAKADKEKKKADKAARKADKAK) has biased composition (basic and acidic residues). The interval 97–155 (KPEIRKAKRDEKAKADKEKKKADKAARKADKAKSAATQASKISKQQAKGAFQKVAATSR) is disordered. Polar residues predominate over residues 133-142 (TQASKISKQQ).

Belongs to the eukaryotic ribosomal protein eL24 family.

In Eremothecium gossypii (strain ATCC 10895 / CBS 109.51 / FGSC 9923 / NRRL Y-1056) (Yeast), this protein is Large ribosomal subunit protein eL24 (RPL24).